The primary structure comprises 313 residues: Malate dehydrogenase (313 aa).

Residues 11–16 (GAGNIG) and Asp-35 contribute to the NAD(+) site. Substrate contacts are provided by Arg-86 and Arg-92. NAD(+)-binding positions include Asn-99 and 122–124 (ISN). Substrate-binding residues include Asn-124 and Arg-155. The active-site Proton acceptor is the His-179.

The protein belongs to the LDH/MDH superfamily. MDH type 3 family.

The enzyme catalyses (S)-malate + NAD(+) = oxaloacetate + NADH + H(+). Catalyzes the reversible oxidation of malate to oxaloacetate. This is Malate dehydrogenase from Sorangium cellulosum (strain So ce56) (Polyangium cellulosum (strain So ce56)).